We begin with the raw amino-acid sequence, 99 residues long: uncharacterized protein (99 aa).

Residues 32-79 (KKSVGIAVLLSFIIPGAGQMYLGRVGKGIILLLTCWLIIPWIYSIYDA) enclose the TM2 domain. 2 helical membrane-spanning segments follow: residues 34–54 (SVGI…MYLG) and 56–76 (VGKG…IYSI).

It localises to the cell membrane. This is an uncharacterized protein from Methanocaldococcus jannaschii (strain ATCC 43067 / DSM 2661 / JAL-1 / JCM 10045 / NBRC 100440) (Methanococcus jannaschii).